A 98-amino-acid polypeptide reads, in one-letter code: Cell cycle protein GpsB (98 aa).

The stretch at 34–71 (LDIVIKDYEAFQQELDELRQENARLKRQVEELQKRPTT) forms a coiled coil.

The protein belongs to the GpsB family. In terms of assembly, forms polymers through the coiled coil domains. Interacts with PBP1, MreC and EzrA.

It is found in the cytoplasm. In terms of biological role, divisome component that associates with the complex late in its assembly, after the Z-ring is formed, and is dependent on DivIC and PBP2B for its recruitment to the divisome. Together with EzrA, is a key component of the system that regulates PBP1 localization during cell cycle progression. Its main role could be the removal of PBP1 from the cell pole after pole maturation is completed. Also contributes to the recruitment of PBP1 to the division complex. Not essential for septum formation. The protein is Cell cycle protein GpsB of Geobacillus thermodenitrificans (strain NG80-2).